Reading from the N-terminus, the 645-residue chain is 1,4-alpha-glucan branching enzyme GlgB (645 aa).

D309 serves as the catalytic Nucleophile. Residue E352 is the Proton donor of the active site. Residues 619 to 645 are disordered; that stretch reads VKTRKGSKKQDGSKTKVRSNVTSRGKR. The segment covering 636-645 has biased composition (polar residues); that stretch reads RSNVTSRGKR.

It belongs to the glycosyl hydrolase 13 family. GlgB subfamily. As to quaternary structure, monomer.

The enzyme catalyses Transfers a segment of a (1-&gt;4)-alpha-D-glucan chain to a primary hydroxy group in a similar glucan chain.. It functions in the pathway glycan biosynthesis; glycogen biosynthesis. In terms of biological role, catalyzes the formation of the alpha-1,6-glucosidic linkages in glycogen by scission of a 1,4-alpha-linked oligosaccharide from growing alpha-1,4-glucan chains and the subsequent attachment of the oligosaccharide to the alpha-1,6 position. This chain is 1,4-alpha-glucan branching enzyme GlgB, found in Bacillus mycoides (strain KBAB4) (Bacillus weihenstephanensis).